Here is a 458-residue protein sequence, read N- to C-terminus: GTPase Der (458 aa).

EngA-type G domains are found at residues 9–171 (KTIA…DLNQ) and 197–368 (IQVG…ECFS). GTP contacts are provided by residues 15 to 22 (GQPNVGKS), 62 to 66 (DTGGM), 123 to 126 (NKID), 203 to 210 (GRVNVGKS), 250 to 254 (DTAGI), and 314 to 317 (NKWD). Residues 369–453 (KRIPTSLLNS…PLILNAKDKK (85 aa)) form the KH-like domain.

This sequence belongs to the TRAFAC class TrmE-Era-EngA-EngB-Septin-like GTPase superfamily. EngA (Der) GTPase family. As to quaternary structure, associates with the 50S ribosomal subunit.

In terms of biological role, GTPase that plays an essential role in the late steps of ribosome biogenesis. This Helicobacter pylori (strain ATCC 700392 / 26695) (Campylobacter pylori) protein is GTPase Der.